A 101-amino-acid chain; its full sequence is Small ribosomal subunit protein uS14 (101 aa).

Over residues 1-10 the composition is skewed to basic and acidic residues; sequence MAKKSSIEKN. The interval 1–23 is disordered; the sequence is MAKKSSIEKNNRRRRMNRNAAAK. Basic residues predominate over residues 11-23; that stretch reads NRRRRMNRNAAAK.

This sequence belongs to the universal ribosomal protein uS14 family. Part of the 30S ribosomal subunit. Contacts proteins S3 and S10.

In terms of biological role, binds 16S rRNA, required for the assembly of 30S particles and may also be responsible for determining the conformation of the 16S rRNA at the A site. This chain is Small ribosomal subunit protein uS14, found in Nitrobacter winogradskyi (strain ATCC 25391 / DSM 10237 / CIP 104748 / NCIMB 11846 / Nb-255).